The chain runs to 416 residues: Floricaula/leafy homolog 2 (416 aa).

A disordered region spans residues 154 to 237 (EGLSEEPVQQ…DASGGISERQ (84 aa)). Positions 210–225 (AEEDEETEEGQEDDWN) are enriched in acidic residues. 3 DNA-binding regions span residues 238–242 (REHPF), 307–314 (NKPKMRHY), and 378–381 (YVPT).

Belongs to the FLO/LFY family. Expressed in floral meristems and in indeterminate vegetative meristems.

The protein resides in the nucleus. In terms of biological role, probable transcription factor that act to specify determinacy in the progenitor cells for both flowers and leaves. In Nicotiana tabacum (Common tobacco), this protein is Floricaula/leafy homolog 2 (FL2).